Here is a 119-residue protein sequence, read N- to C-terminus: Large ribosomal subunit protein uL18 (119 aa).

Residues 54–76 are disordered; sequence LTSASTLADDVEGETPTEESRSV.

It belongs to the universal ribosomal protein uL18 family. Part of the 50S ribosomal subunit; part of the 5S rRNA/L5/L18/L25 subcomplex. Contacts the 5S and 23S rRNAs.

This is one of the proteins that bind and probably mediate the attachment of the 5S RNA into the large ribosomal subunit, where it forms part of the central protuberance. In Salinibacter ruber (strain DSM 13855 / M31), this protein is Large ribosomal subunit protein uL18.